A 150-amino-acid chain; its full sequence is MFLPKFNPIRSFSPILRAKTLLRYQNRMYLSTEIRKAIEDAIESAPVVLFMKGTPEFPKCGFSRATIGLLGNQGVDPAKFAAYNVLEDPELREGIKEFSEWPTIPQLYVNKEFIGGCDVITSMARSGELADLLEEAQALVPEEEEETKDR.

The N-terminal 29 residues, 1–29, are a transit peptide targeting the mitochondrion; sequence MFLPKFNPIRSFSPILRAKTLLRYQNRMY. A Glutaredoxin domain is found at 35–140; the sequence is RKAIEDAIES…DLLEEAQALV (106 aa). K52 contributes to the glutathione binding site. A [2Fe-2S] cluster-binding site is contributed by C60. Glutathione-binding positions include 92–96, I104, and 117–118; these read REGIK and CD.

The protein belongs to the glutaredoxin family. Monothiol subfamily. As to quaternary structure, homodimer. Interacts with SSQ1. Interacts with BOL1.

The protein resides in the mitochondrion matrix. Functionally, monothiol glutaredoxin involved in mitochondrial iron-sulfur (Fe/S) cluster transfer. Receives 2Fe/2S clusters from scaffold protein ISU1 and mediates their transfer to apoproteins, to the 4Fe/FS cluster biosynthesis machinery, or export from mitochondrion. This Saccharomyces cerevisiae (strain ATCC 204508 / S288c) (Baker's yeast) protein is Monothiol glutaredoxin-5, mitochondrial.